The following is a 204-amino-acid chain: MRALPGAGTVCDTAGVTERSRENRHPTGRGPRAGSVSAASRAVRHRRLAQHALSHNISDMNRSVPTDSQVSLDAIVGISDSDLMISQPYRLYVERLDPSRNMARYYAMSIEPNLFGDICLLRKWGRIGTKGQMMVHHFGQEEDAVRLFLDLLRQKRKRGYRPRPSLPKEKWPAEAEHESATSAPVPDPEGHLDLDEERNLDGEL.

Disordered regions lie at residues methionine 1–serine 37 and glycine 159–leucine 204. Positions glycine 28 to serine 37 are enriched in low complexity. Residues proline 88–alanine 175 enclose the WGR domain. Basic and acidic residues-rich tracts occupy residues leucine 166 to serine 179 and proline 188 to leucine 204.

This is an uncharacterized protein from Sinorhizobium fredii (strain NBRC 101917 / NGR234).